The sequence spans 641 residues: MNLCSSGATASTTSLSSTGQAERSGGGGVAGGGGISNGGGGGGGVTGSGGGGGGNTSDGLSEATHCFGGSGGGATASGPEETINAISPANGGGASGAQQPSGSNGQLHNENNAIMPPETRPKMVTVKHPESNKPKPTTKKSKPIQADQDVIKALQRCRDEGIKRLDLSKSSITVIPSTVKDCVQITELYLYSNKIGQLPPEIGCLVNLRNLALNENSLTSLPESLQNCNQLKVLDLRHNKLAEIPPVIYRLRSLTTLYLRFNRITAVADDLRQLVNLTMLSLRENKIRELGSAIGALVNLTTLDVSHNHLEHLPEDIGNCVNLSALDLQHNELLDIPDSIGNLKSLVRLGMRYNRLTSVPATLKNCKCMDEFNVEGNGITQLPDGMLASLSGLTTITLSRNQFTSYPTGGPAQFTNVYSINLEHNRIDKIPYGIFSRAKGLTKLNMKENMLTALPLDIGTWVNMVELNLATNALQKLPDDIMNLQNLEILILSNNMLKKIPNTIGNLRRLRILDLEENRIETLPHEIGLLHELQRLILQTNQITMLPRSIGHLGNLTHLSVSENNLQFLPEEIGSLESLENLYINQNPGLEKLPFELALCQNLKYLNIDKCPLSTIPPEIQAGGPSLVLQWLKMHSPYRQM.

The span at 1-19 (MNLCSSGATASTTSLSSTG) shows a compositional bias: low complexity. The disordered stretch occupies residues 1–146 (MNLCSSGATA…TTKKSKPIQA (146 aa)). Over residues 24–56 (SGGGGVAGGGGISNGGGGGGGVTGSGGGGGGNT) the composition is skewed to gly residues. Residues 96–106 (GAQQPSGSNGQ) show a composition bias toward low complexity. LRR repeat units lie at residues 161–182 (GIKR…VKDC), 184–205 (QITE…IGCL), 207–228 (NLRN…LQNC), 230–251 (QLKV…IYRL), 253–274 (SLTT…LRQL), 276–297 (NLTM…IGAL), 299–320 (NLTT…IGNC), 322–343 (NLSA…IGNL), 345–367 (SLVR…KNCK), 368–389 (CMDE…MLAS), 392–413 (GLTT…GPAQ), 416–437 (NVYS…IFSR), 440–461 (GLTK…IGTW), 463–484 (NMVE…IMNL), 486–507 (NLEI…IGNL), 509–530 (RLRI…IGLL), 532–553 (ELQR…IGHL), 555–576 (NLTH…IGSL), 578–600 (SLEN…LALC), and 602–623 (NLKY…IQAG).

Belongs to the SHOC2 family.

Its function is as follows. Acts as a Ras effector and participates in MAPK pathway activation. Probably acts as a regulatory subunit of protein phosphatase that specifically dephosphorylates Raf kinase and stimulate Raf activity at specialized signaling complexes upon Ras activation. The chain is Leucine-rich repeat protein soc-2 homolog (Sur-8) from Drosophila ananassae (Fruit fly).